The primary structure comprises 338 residues: Ketol-acid reductoisomerase (NADP(+)) (338 aa).

A KARI N-terminal Rossmann domain is found at 1–181; that stretch reads MKVFYDKDCD…GGGKAGIIET (181 aa). NADP(+) contacts are provided by residues 24-27, Arg47, and Ser52; that span reads YGSQ. His107 is an active-site residue. Residue Gly133 participates in NADP(+) binding. The 146-residue stretch at 182–327 folds into the KARI C-terminal knotted domain; sequence NFREETETDL…GKLRAMMPWI (146 aa). Mg(2+) contacts are provided by Asp190, Glu194, Glu226, and Glu230. Ser251 contacts substrate.

This sequence belongs to the ketol-acid reductoisomerase family. The cofactor is Mg(2+).

It catalyses the reaction (2R)-2,3-dihydroxy-3-methylbutanoate + NADP(+) = (2S)-2-acetolactate + NADPH + H(+). The enzyme catalyses (2R,3R)-2,3-dihydroxy-3-methylpentanoate + NADP(+) = (S)-2-ethyl-2-hydroxy-3-oxobutanoate + NADPH + H(+). It functions in the pathway amino-acid biosynthesis; L-isoleucine biosynthesis; L-isoleucine from 2-oxobutanoate: step 2/4. Its pathway is amino-acid biosynthesis; L-valine biosynthesis; L-valine from pyruvate: step 2/4. Involved in the biosynthesis of branched-chain amino acids (BCAA). Catalyzes an alkyl-migration followed by a ketol-acid reduction of (S)-2-acetolactate (S2AL) to yield (R)-2,3-dihydroxy-isovalerate. In the isomerase reaction, S2AL is rearranged via a Mg-dependent methyl migration to produce 3-hydroxy-3-methyl-2-ketobutyrate (HMKB). In the reductase reaction, this 2-ketoacid undergoes a metal-dependent reduction by NADPH to yield (R)-2,3-dihydroxy-isovalerate. The protein is Ketol-acid reductoisomerase (NADP(+)) of Polaromonas naphthalenivorans (strain CJ2).